A 1036-amino-acid chain; its full sequence is Protein smoothened (1036 aa).

Residues 1–31 (MQYLNFPRMPNIMMFLEVAILCLWVVADASA) form the signal peptide. At 32 to 258 (SSAKFGSTTP…DDEHRQIHKL (227 aa)) the chain is on the extracellular side. 2 N-linked (GlcNAc...) asparagine glycosylation sites follow: Asn-55 and Asn-95. Positions 85 to 206 (VRRARCYPTS…TLFPTKCTNG (122 aa)) constitute an FZ domain. 4 disulfide bridges follow: Cys-90-Cys-155, Cys-100-Cys-148, Cys-139-Cys-179, and Cys-172-Cys-194. Asn-184, Asn-195, and Asn-213 each carry an N-linked (GlcNAc...) asparagine glycan. Intrachain disulfides connect Cys-218–Cys-238 and Cys-242–Cys-320. The chain crosses the membrane as a helical span at residues 259–279 (IGWAGSICLLSNLFVVSTFFI). Residues 280–287 (DWKNANKY) are Cytoplasmic-facing. A helical membrane pass occupies residues 288-308 (PAVIVFYINLCFLIACVGWLL). Topologically, residues 309–339 (QFTSGSREDIVCRKDGTLRHSEPTAGENLSC) are extracellular. Residue Asn-336 is glycosylated (N-linked (GlcNAc...) asparagine). Residues Cys-339 and Cys-413 are joined by a disulfide bond. Residues 340–360 (IVIFVLVYYFLTAGMVWFVFL) traverse the membrane as a helical segment. Residues 361 to 381 (TYAWHWRAMGHVQDRIDKKGS) lie on the Cytoplasmic side of the membrane. The helical transmembrane segment at 382–402 (YFHLVAWSLPLVLTITTMAFS) threads the bilayer. Over 403–421 (EVDGNSIVGICFVGYINHS) the chain is Extracellular. Asn-419 carries N-linked (GlcNAc...) asparagine glycosylation. The helical transmembrane segment at 422-442 (MRAGLLLGPLCGVILIGGYFI) threads the bilayer. The Cytoplasmic portion of the chain corresponds to 443-469 (TRGMVMLFGLKHFANDIKSTSASNKIH). The helical transmembrane segment at 470-490 (LIIMRMGVCALLTLVFILVAI) threads the bilayer. The Extracellular portion of the chain corresponds to 491-532 (ACHVTEFRHADEWAQSFRQFIICKISSVFEEKSSCRIENRPS). A disulfide bond links Cys-513 and Cys-525. The helical transmembrane segment at 533 to 553 (VGVLQLHLLCLFSSGIVMSTW) threads the bilayer. At 554 to 1036 (CWTPSSIETW…KLKMLLLPSK (483 aa)) the chain is on the cytoplasmic side. Phosphoserine is present on residues Ser-658, Ser-659, Ser-667, Ser-670, Ser-673, Ser-687, Ser-690, and Ser-693. 2 disordered regions span residues 678–745 (HVSV…TSVE) and 870–902 (IKKSNESNSNRHSRNSARSQSKKSQKRHLKNPA). A compositionally biased stretch (basic residues) spans 880 to 899 (RHSRNSARSQSKKSQKRHLK).

It belongs to the G-protein coupled receptor Fz/Smo family. Interacts with cos. In terms of processing, phosphorylation by CkIalpha and PKA regulates smo accumulation at the cell surface and its signaling activity in response to hh. Expressed in olfactory sensory neurons (at protein level).

The protein localises to the cell membrane. It is found in the cell projection. Its subcellular location is the cilium. Segment polarity protein required for correct patterning of every segment. G protein-coupled receptor which associates with the patched protein (ptc) to transduce the hedgehog (hh) signal through the activation of an inhibitory G-protein. In the absence of hh, ptc represses the constitutive signaling activity of smo through fused (fu). Essential component of a hh-signaling pathway which regulates the Duox-dependent gut immune response to bacterial uracil; required to activate Cad99C-dependent endosome formation, norpA-dependent Ca2+ mobilization and p38 MAPK, which are essential steps in the Duox-dependent production of reactive oxygen species (ROS) in response to intestinal bacterial infection. The sequence is that of Protein smoothened (smo) from Drosophila melanogaster (Fruit fly).